A 365-amino-acid chain; its full sequence is Putative glutamate--cysteine ligase 2-3 (365 aa).

Belongs to the glutamate--cysteine ligase type 2 family. YbdK subfamily.

It carries out the reaction L-cysteine + L-glutamate + ATP = gamma-L-glutamyl-L-cysteine + ADP + phosphate + H(+). ATP-dependent carboxylate-amine ligase which exhibits weak glutamate--cysteine ligase activity. The chain is Putative glutamate--cysteine ligase 2-3 from Mycolicibacterium smegmatis (strain ATCC 700084 / mc(2)155) (Mycobacterium smegmatis).